The chain runs to 62 residues: uncharacterized protein (62 aa).

The tract at residues 1 to 62 is disordered; the sequence is MSSTAEEMAA…SNGEAKRKEK (62 aa). A compositionally biased stretch (basic and acidic residues) spans 28 to 37; sequence TKSDRVEHKH.

This is an uncharacterized protein from Caenorhabditis elegans.